Here is a 229-residue protein sequence, read N- to C-terminus: Large ribosomal subunit protein uL1 (229 aa).

The protein belongs to the universal ribosomal protein uL1 family. Part of the 50S ribosomal subunit.

Binds directly to 23S rRNA. The L1 stalk is quite mobile in the ribosome, and is involved in E site tRNA release. Functionally, protein L1 is also a translational repressor protein, it controls the translation of the L11 operon by binding to its mRNA. The sequence is that of Large ribosomal subunit protein uL1 from Actinobacillus pleuropneumoniae serotype 3 (strain JL03).